Consider the following 133-residue polypeptide: Salivary cystatin-L (133 aa).

Residues 1 to 19 (MTSTFALVLLLGGMAVCVA) form the signal peptide. In terms of domain architecture, Cystatin spans 30–118 (ANHQANPEFL…RTCTTVVFEN (89 aa)). Cystine bridges form between Cys89–Cys100 and Cys111–Cys130.

It belongs to the cystatin family. Monomer. Can form homodimers in vitro, but probably not in vivo. Homodimers are predicted to be inactive; dimerization disrupts the interaction with target proteases. In terms of tissue distribution, detected in saliva (at protein level). Detected in salivary gland and midgut.

Its subcellular location is the secreted. Contributes to the suppression of the host's immune response to tick salivary proteins and is important for successful feeding on hosts. Inhibitor of cysteine proteinases. Inhibits host papain and cathepsin L (CTSL) (in vitro). Inhibits host cathepsin S (CTSS) (in vitro). Inhibits host CTSV and CTSC, but to a lesser degree (in vitro). Inhibits host immune responses via its inhibition of host cathepsins. Inhibits differentiation of host dendritic cells. Inhibits proliferation of host T-cells in response to antigen stimulus. Down-regulates IL1B production by host mast cells, and this then leads to impaired activation of IL1R1, resulting in decreased IL9 production. Inhibits host inflammatory reactions and recruitment of host neutrophils. Attenuates IFN-beta (IFNB1)-triggered JAK/STAT signaling pathway in mouse dendritic cells. In terms of biological role, (Microbial infection) Down-regulates TLR2-mediated host responses to infection by Borrelia burgdorferi and the production of the chemokine CCL3 by host dendritic cells. Down-regulates host responses to infection by B.burgdorferi and the production of IFNB1 by host dendritic cells. This chain is Salivary cystatin-L, found in Ixodes scapularis (Black-legged tick).